Consider the following 392-residue polypeptide: Glutamate 5-kinase (392 aa).

Lys17 is a binding site for ATP. Positions 57, 144, and 156 each coordinate substrate. Ser176–Asp177 contacts ATP. The PUA domain occupies Ala282–Ala359. Residues Thr373–Ala392 are disordered.

It belongs to the glutamate 5-kinase family.

The protein resides in the cytoplasm. The enzyme catalyses L-glutamate + ATP = L-glutamyl 5-phosphate + ADP. It functions in the pathway amino-acid biosynthesis; L-proline biosynthesis; L-glutamate 5-semialdehyde from L-glutamate: step 1/2. In terms of biological role, catalyzes the transfer of a phosphate group to glutamate to form L-glutamate 5-phosphate. This chain is Glutamate 5-kinase, found in Allorhizobium ampelinum (strain ATCC BAA-846 / DSM 112012 / S4) (Agrobacterium vitis (strain S4)).